The primary structure comprises 460 residues: Transcriptional regulatory protein UME1 (460 aa).

The NEE-box motif lies at 14-22 (NEEFKIWKK). 4 WD repeats span residues 233-271 (PGIK…KPLW), 276-316 (SLDG…ALGD), 339-379 (FYSE…AIYN), and 411-451 (GENN…VLDG).

In terms of assembly, component of the RPD3C(L) complex composed of at least ASH1, CTI6, DEP1, PHO23, RPD3, RXT2, RXT3, SAP30, SDS3, SIN3, UME1 and UME6. Component of the RPD3C(S) complex composed of at least EAF3, RCO1, RPD3, SIN3, and UME1. Interacts with RPD3.

The protein resides in the cytoplasm. The protein localises to the nucleus. Its function is as follows. Catalytic component of the RPD3 histone deacetylase complexes RPD3C(L) and RPD3C(S) responsible for the deacetylation of lysine residues on the N-terminal part of the core histones (H2A, H2B, H3 and H4). Histone deacetylation gives a tag for epigenetic repression and plays an important role in transcriptional regulation, cell cycle progression and developmental events. This is Transcriptional regulatory protein UME1 (UME1) from Saccharomyces cerevisiae (strain ATCC 204508 / S288c) (Baker's yeast).